The chain runs to 95 residues: Acylphosphatase (95 aa).

In terms of domain architecture, Acylphosphatase-like spans 5–93; that stretch reads RAHVFIRGKV…GEFKDFKILP (89 aa). Active-site residues include arginine 20 and asparagine 38.

The protein belongs to the acylphosphatase family.

It carries out the reaction an acyl phosphate + H2O = a carboxylate + phosphate + H(+). The protein is Acylphosphatase (acyP) of Pyrobaculum aerophilum (strain ATCC 51768 / DSM 7523 / JCM 9630 / CIP 104966 / NBRC 100827 / IM2).